The sequence spans 259 residues: Dihydroorotate dehydrogenase B (NAD(+)), electron transfer subunit (259 aa).

Positions 1 to 101 constitute an FAD-binding FR-type domain; sequence MKIEDCTVEE…MGPLGRGYDV (101 aa). FAD-binding positions include 52-55, 69-71, and 76-77; these read RPIS, IYR, and GT. The [2Fe-2S] cluster site is built by C223, C228, C231, and C245.

It belongs to the PyrK family. As to quaternary structure, heterotetramer of 2 PyrK and 2 PyrD type B subunits. It depends on [2Fe-2S] cluster as a cofactor. FAD is required as a cofactor.

It participates in pyrimidine metabolism; UMP biosynthesis via de novo pathway; orotate from (S)-dihydroorotate (NAD(+) route): step 1/1. Its function is as follows. Responsible for channeling the electrons from the oxidation of dihydroorotate from the FMN redox center in the PyrD type B subunit to the ultimate electron acceptor NAD(+). The polypeptide is Dihydroorotate dehydrogenase B (NAD(+)), electron transfer subunit (Fusobacterium nucleatum subsp. nucleatum (strain ATCC 25586 / DSM 15643 / BCRC 10681 / CIP 101130 / JCM 8532 / KCTC 2640 / LMG 13131 / VPI 4355)).